The primary structure comprises 541 residues: Anthranilate synthase component 1 (541 aa).

Residues Ser61 and 311–313 each bind L-tryptophan; that span reads PYM. 348 to 349 serves as a coordination point for chorismate; that stretch reads GT. A Mg(2+)-binding site is contributed by Glu381. Chorismate is bound by residues Tyr469, Arg489, 503–505, and Gly505; that span reads GAG. A Mg(2+)-binding site is contributed by Glu518.

This sequence belongs to the anthranilate synthase component I family. In terms of assembly, heterotetramer consisting of two non-identical subunits: a beta subunit (TrpG) and a large alpha subunit (TrpE). Mg(2+) is required as a cofactor.

The catalysed reaction is chorismate + L-glutamine = anthranilate + pyruvate + L-glutamate + H(+). The protein operates within amino-acid biosynthesis; L-tryptophan biosynthesis; L-tryptophan from chorismate: step 1/5. With respect to regulation, feedback inhibited by tryptophan. In terms of biological role, part of a heterotetrameric complex that catalyzes the two-step biosynthesis of anthranilate, an intermediate in the biosynthesis of L-tryptophan. In the first step, the glutamine-binding beta subunit (TrpG) of anthranilate synthase (AS) provides the glutamine amidotransferase activity which generates ammonia as a substrate that, along with chorismate, is used in the second step, catalyzed by the large alpha subunit of AS (TrpE) to produce anthranilate. In the absence of TrpG, TrpE can synthesize anthranilate directly from chorismate and high concentrations of ammonia. The polypeptide is Anthranilate synthase component 1 (trpE) (Vibrio parahaemolyticus serotype O3:K6 (strain RIMD 2210633)).